The sequence spans 133 residues: MSWQTYVDEHLMCDIDGQGQQLAASAIVGHDGSVWAQSSSFPQLKPEEITGIMKDFDEPGHLAPTGLHLGGTKYMVIQGEAGAVIRGKKGSGGITIKKTGQALVFGIYEEPVTPGQCNMVVERLGDYLIDQGL.

An intrachain disulfide couples C13 to C117. An Involved in PIP2 interaction motif is present at residues 83-99; it reads AVIRGKKGSGGITIKKT. T113 carries the phosphothreonine modification.

The protein belongs to the profilin family. In terms of assembly, occurs in many kinds of cells as a complex with monomeric actin in a 1:1 ratio. Post-translationally, phosphorylated by MAP kinases.

Its subcellular location is the cytoplasm. The protein localises to the cytoskeleton. Binds to actin and affects the structure of the cytoskeleton. At high concentrations, profilin prevents the polymerization of actin, whereas it enhances it at low concentrations. This is Profilin-4 from Corylus avellana (European hazel).